Here is a 385-residue protein sequence, read N- to C-terminus: Ethanolamine kinase 2 (385 aa).

The protein belongs to the choline/ethanolamine kinase family.

The catalysed reaction is ethanolamine + ATP = phosphoethanolamine + ADP + H(+). It functions in the pathway phospholipid metabolism; phosphatidylethanolamine biosynthesis; phosphatidylethanolamine from ethanolamine: step 1/3. In terms of biological role, highly specific for ethanolamine phosphorylation. Does not have choline kinase activity. The protein is Ethanolamine kinase 2 (Etnk2) of Rattus norvegicus (Rat).